We begin with the raw amino-acid sequence, 293 residues long: GPN-loop GTPase 3 (293 aa).

A GTP-binding site is contributed by 13 to 18 (GAGKST). The Gly-Pro-Asn (GPN)-loop; involved in dimer interface motif lies at 70-72 (GPN). A GTP-binding site is contributed by 176–179 (SKMD). Residues 272-281 (HEAQEPREPN) are compositionally biased toward basic and acidic residues. Residues 272 to 293 (HEAQEPREPNDEQDVDYEDADI) form a disordered region. A compositionally biased stretch (acidic residues) spans 282 to 293 (DEQDVDYEDADI).

It belongs to the GPN-loop GTPase family. As to quaternary structure, heterodimers with gpn1 or gpn2. Binds to RNA polymerase II (RNAPII).

In terms of biological role, small GTPase required for proper nuclear import of RNA polymerase II and III (RNAPII and RNAPIII). May act at an RNAP assembly step prior to nuclear import. The protein is GPN-loop GTPase 3 of Aspergillus fumigatus (strain ATCC MYA-4609 / CBS 101355 / FGSC A1100 / Af293) (Neosartorya fumigata).